A 130-amino-acid chain; its full sequence is Small ribosomal subunit protein uS11 (130 aa).

The protein belongs to the universal ribosomal protein uS11 family. Part of the 30S ribosomal subunit. Interacts with proteins S7 and S18. Binds to IF-3.

In terms of biological role, located on the platform of the 30S subunit, it bridges several disparate RNA helices of the 16S rRNA. Forms part of the Shine-Dalgarno cleft in the 70S ribosome. This Buchnera aphidicola subsp. Schizaphis graminum (strain Sg) protein is Small ribosomal subunit protein uS11.